The sequence spans 392 residues: MERVVERVAVTGAEAVANAMRQIEPDVVAAYPITPQTPIVEYFARFVADGVVRTEMIPVESEHSAMSAVVGAAAAGARAMTATSANGLALMHEIVYIAASYRLPIVMPVVNRALSGPINIHCDHSDAMAERDSGWIQLFAETNQEAYDFTILAVRLAEHEDVRLPVMVNLDGFILSHGVEPVEFYPDELVKKFVGELKPMYPLLDTEHPVTWGPLDLYDYYFEHKRQQIEAMENVKKVFPEIAKEFEETFGRKYWFVEPYRMEDAEHVMVALGSTNSTIKYVVDELREEGYKVGSLKIWMFRPFPKEQLQELLNGRKSVVVLDRAVSFGAEAPLYEAVKSALYEVAARPMLGSYVYGLGGRDIKPEHIRKAFEDAINGNLIADEQRYLGLRE.

Heterotetramer of one alpha, one beta, one delta and one gamma chain.

The catalysed reaction is 2 oxidized [2Fe-2S]-[ferredoxin] + pyruvate + CoA = 2 reduced [2Fe-2S]-[ferredoxin] + acetyl-CoA + CO2 + H(+). The polypeptide is Pyruvate synthase subunit PorA (porA) (Thermotoga maritima (strain ATCC 43589 / DSM 3109 / JCM 10099 / NBRC 100826 / MSB8)).